The following is a 602-amino-acid chain: Glutamine--fructose-6-phosphate aminotransferase [isomerizing] (602 aa).

Catalysis depends on Cys-2, which acts as the Nucleophile; for GATase activity. One can recognise a Glutamine amidotransferase type-2 domain in the interval 2–217; that stretch reads CGIVGVVGNT…DQELVIVKAD (216 aa). A disordered region spans residues 67 to 87; the sequence is IGHTRWATHGKPTEDNAHPHR. Residues 77–87 are compositionally biased toward basic and acidic residues; it reads KPTEDNAHPHR. 2 SIS domains span residues 283–422 and 455–592; these read IIKA…ANGN and VREL…VDKP. Lys-597 acts as the For Fru-6P isomerization activity in catalysis.

Homodimer.

The protein resides in the cytoplasm. The catalysed reaction is D-fructose 6-phosphate + L-glutamine = D-glucosamine 6-phosphate + L-glutamate. Its function is as follows. Catalyzes the first step in hexosamine metabolism, converting fructose-6P into glucosamine-6P using glutamine as a nitrogen source. This chain is Glutamine--fructose-6-phosphate aminotransferase [isomerizing], found in Streptococcus pneumoniae serotype 4 (strain ATCC BAA-334 / TIGR4).